A 101-amino-acid polypeptide reads, in one-letter code: NAD(P)H-quinone oxidoreductase subunit 4L, chloroplastic (101 aa).

3 helical membrane passes run 2–22 (MLEH…YGLI), 32–52 (MCLE…SDFF), and 61–81 (IFSI…PAIV).

The protein belongs to the complex I subunit 4L family. As to quaternary structure, NDH is composed of at least 16 different subunits, 5 of which are encoded in the nucleus.

It localises to the plastid. The protein resides in the chloroplast thylakoid membrane. It carries out the reaction a plastoquinone + NADH + (n+1) H(+)(in) = a plastoquinol + NAD(+) + n H(+)(out). The catalysed reaction is a plastoquinone + NADPH + (n+1) H(+)(in) = a plastoquinol + NADP(+) + n H(+)(out). In terms of biological role, NDH shuttles electrons from NAD(P)H:plastoquinone, via FMN and iron-sulfur (Fe-S) centers, to quinones in the photosynthetic chain and possibly in a chloroplast respiratory chain. The immediate electron acceptor for the enzyme in this species is believed to be plastoquinone. Couples the redox reaction to proton translocation, and thus conserves the redox energy in a proton gradient. This is NAD(P)H-quinone oxidoreductase subunit 4L, chloroplastic from Morus indica (Mulberry).